A 997-amino-acid chain; its full sequence is MAMAEFVFCRPLFGLAIVLLVAPIDAAQRHTASDNPSTYNIGGVLSNSDSEEHFSTTIKHLNFDQQYVPRKVTYYDKTIRMDKNPIKTVFNVCDKLIENRVYAVVVSHEQTSGDLSPAAVSYTSGFYSIPVIGISSRDAAFSDKNIHVSFLRTVPPYYHQADVWLEMLSHFAYTKVIIIHSSDTDGRAILGRFQTTSQTYYDDVDVRATVELIVEFEPKLESFTEHLIDMKTAQSRVYLMYASTEDAQVIFRDAGEYNMTGEGHVWIVTEQALFSNNTPDGVLGLQLEHAHSDKGHIRDSVYVLASAIKEMISNETIAEAPKDCGDSAVNWESGKRLFQYLKSRNITGETGQVAFDDNGDRIYAGYDVINIREQQKKHVVGKFSYDSMRAKMRMRINDSEIIWPGKQRRKPEGIMIPTHLRLLTIEEKPFVYVRRMGDDEFRCEPDERPCPLFNNSDATANEFCCRGYCIDLLIELSKRINFTYDLALSPDGQFGHYILRNNTGAMTLRKEWTGLIGELVNERADMIVAPLTINPERAEYIEFSKPFKYQGITILEKKPSRSSTLVSFLQPFSNTLWILVMVSVHVVALVLYLLDRFSPFGRFKLSHSDSNEEKALNLSSAVWFAWGVLLNSGIGEGTPRSFSARVLGMVWAGFAMIIVASYTANLAAFLVLERPKTKLSGINDARLRNTMENLTCATVKGSSVDMYFRRQVELSNMYRTMEANNYATAEQAIQDVKKGKLMAFIWDSSRLEYEASKDCELVTAGELFGRSGYGIGLQKGSPWTDAVTLAILEFHESGFMEKLDKQWIFHGHVQQNCELFEKTPNTLGLKNMAGVFILVGVGIAGGVGLIIIEVIYKKHQVKKQKRLDIARHAADKWRGTIEKRKTIRASLAMQRQYNVGLNSTHAPGTISLAVDKRRYPRLGQRLGPERAWPGDAADVLRIRRPYELGNPGQSPKVMAANQPGMPMPMLGKTRPQQSVLPPRYSPGYTSDVSHLVV.

Residues 1–26 (MAMAEFVFCRPLFGLAIVLLVAPIDA) form the signal peptide. Residues 27–573 (AQRHTASDNP…TLVSFLQPFS (547 aa)) lie on the Extracellular side of the membrane. N-linked (GlcNAc...) asparagine glycosylation is found at Asn258, Asn314, Asn345, Asn397, Asn454, Asn481, and Asn501. Glycine contacts are provided by residues 530-532 (PLT) and Arg537. Residues 574-594 (NTLWILVMVSVHVVALVLYLL) form a helical membrane-spanning segment. Topologically, residues 595–651 (DRFSPFGRFKLSHSDSNEEKALNLSSAVWFAWGVLLNSGIGEGTPRSFSARVLGMVW) are cytoplasmic. Residues 652 to 672 (AGFAMIIVASYTANLAAFLVL) form a helical membrane-spanning segment. At 673–831 (ERPKTKLSGI…KTPNTLGLKN (159 aa)) the chain is on the extracellular side. Residue Asn693 is glycosylated (N-linked (GlcNAc...) asparagine). 2 residues coordinate glycine: Ser703 and Asp747. Residues 832–852 (MAGVFILVGVGIAGGVGLIII) form a helical membrane-spanning segment. Residues 853 to 997 (EVIYKKHQVK…YTSDVSHLVV (145 aa)) lie on the Cytoplasmic side of the membrane. The interval 970–997 (LGKTRPQQSVLPPRYSPGYTSDVSHLVV) is disordered. The segment covering 987–997 (GYTSDVSHLVV) has biased composition (polar residues).

It belongs to the glutamate-gated ion channel (TC 1.A.10.1) family. In terms of assembly, forms a heteromeric NMDA channel with Nmdar2. As to expression, highly expressed in adult heads: in the brain and ring gland. Low expression throughout the entire brain is also seen. Higher expression levels were observed in some scattered cell bodies and part of their fibers, including those from several pairs of DPM (dorsal-posterior-medial) neurons surrounding the calyx, DAL (dorsal-anterior-lateral) and DPL (dorsal-posterior-lateral) neurons in the lateral protocerebrum (LP), VAL (ventral-anterior-lateral) neurons in the anterior protocerebrum, and two pairs of VP (ventral-posterior) neurons in the posterior protocerebrum. Many cell bodies in the optic lobes show preferential expression. Punctuate expression is notably detected in many brain regions including the superior medial protocerebrum. Weakly expressed in the antennal lobes and central complex.

The protein localises to the cell membrane. Its subcellular location is the postsynaptic cell membrane. It localises to the postsynaptic density. Its function is as follows. NMDA receptor subtype of glutamate-gated ion channels with high calcium permeability and voltage-dependent sensitivity to magnesium. Mediated by glycine. This protein plays a key role in synaptic plasticity, synaptogenesis, excitotoxicity, memory acquisition and learning. It mediates neuronal functions in glutamate neurotransmission. Is involved in the cell surface targeting of NMDA receptors. Plays a role in associative learning and in long-term memory consolidation. This Drosophila melanogaster (Fruit fly) protein is Glutamate [NMDA] receptor subunit 1.